A 324-amino-acid polypeptide reads, in one-letter code: Malate dehydrogenase (324 aa).

Residues 7 to 13 and D34 contribute to the NAD(+) site; that span reads GAAGGIG. The substrate site is built by R88 and R94. Residues N101 and 124-126 contribute to the NAD(+) site; that span reads VTN. Residues N126 and R160 each contribute to the substrate site. The active-site Proton acceptor is the H184. M238 contacts NAD(+).

This sequence belongs to the LDH/MDH superfamily. MDH type 1 family. As to quaternary structure, homodimer.

The enzyme catalyses (S)-malate + NAD(+) = oxaloacetate + NADH + H(+). In terms of biological role, catalyzes the reversible oxidation of malate to oxaloacetate. This is Malate dehydrogenase from Haemophilus ducreyi (strain 35000HP / ATCC 700724).